Consider the following 499-residue polypeptide: Glucosylglycerol-phosphate synthase (499 aa).

Belongs to the glycosyltransferase 20 family. As to quaternary structure, interacts with GGP-P. Post-translationally, seems to be degraded, at least in vitro, by FtsH2. In an ftsH2 disruption strain inactive GGPS accumulates.

It is found in the cytoplasm. The enzyme catalyses ADP-alpha-D-glucose + sn-glycerol 3-phosphate = 2-O-(alpha-D-glucopyranosyl)-sn-glycerol 3-phosphate + ADP + H(+). It functions in the pathway glycan metabolism; glucosylglycerol biosynthesis. In terms of biological role, involved in salt tolerance by producing GG-phosphate from ADP-glucose and glycerol-3-phosphate (G3P), an intermediate in the synthesis of the osmolyte glucosylglycerol (GG). This is Glucosylglycerol-phosphate synthase (ggpS) from Synechocystis sp. (strain ATCC 27184 / PCC 6803 / Kazusa).